The following is a 165-amino-acid chain: MKYTSYILAFQLCIVLGSLGCYCQDPYVKEAENLKKYFNAGDPDVADNGTLFLDILRNWKEESDRKIMQSQIVSFYFKLFKNFKDDQRIQKSVETIKEDINVKFFNSNKKKRDDFEKLTNYSVTDSNVQRKAVHELIQVMAELSPAAKIGKRKRSQMFRGRRASQ.

The signal sequence occupies residues 1 to 23 (MKYTSYILAFQLCIVLGSLGCYC). The residue at position 24 (Q24) is a Pyrrolidone carboxylic acid. 2 N-linked (GlcNAc...) asparagine glycosylation sites follow: N48 and N120.

It belongs to the type II (or gamma) interferon family. In terms of assembly, homodimer. Interacts with IFNGR1 (via extracellular domain); this interaction promotes IFNGR1 dimerization. In terms of tissue distribution, released primarily from activated T lymphocytes.

Its subcellular location is the secreted. Type II interferon produced by immune cells such as T-cells and NK cells that plays crucial roles in antimicrobial, antiviral, and antitumor responses by activating effector immune cells and enhancing antigen presentation. Primarily signals through the JAK-STAT pathway after interaction with its receptor IFNGR1 to affect gene regulation. Upon IFNG binding, IFNGR1 intracellular domain opens out to allow association of downstream signaling components JAK2, JAK1 and STAT1, leading to STAT1 activation, nuclear translocation and transcription of IFNG-regulated genes. Many of the induced genes are transcription factors such as IRF1 that are able to further drive regulation of a next wave of transcription. Plays a role in class I antigen presentation pathway by inducing a replacement of catalytic proteasome subunits with immunoproteasome subunits. In turn, increases the quantity, quality, and repertoire of peptides for class I MHC loading. Increases the efficiency of peptide generation also by inducing the expression of activator PA28 that associates with the proteasome and alters its proteolytic cleavage preference. Up-regulates as well MHC II complexes on the cell surface by promoting expression of several key molecules such as cathepsins B/CTSB, H/CTSH, and L/CTSL. Participates in the regulation of hematopoietic stem cells during development and under homeostatic conditions by affecting their development, quiescence, and differentiation. The chain is Interferon gamma (IFNG) from Macaca fascicularis (Crab-eating macaque).